Reading from the N-terminus, the 473-residue chain is Lactate utilization protein B (473 aa).

4Fe-4S ferredoxin-type domains are found at residues 302-332 (GSEFRSVLQCIRCAACVNVCPVYRHVGGHSY) and 351-380 (YDDYKELPYASSLCGACTEACPVKIPLHDL). [4Fe-4S] cluster contacts are provided by Cys311, Cys314, Cys317, Cys321, Cys364, Cys367, and Cys371.

This sequence belongs to the LutB/YkgF family.

Is involved in L-lactate degradation and allows cells to grow with lactate as the sole carbon source. Has probably a role as an electron transporter during oxidation of L-lactate. The chain is Lactate utilization protein B from Bacillus cereus (strain G9842).